Reading from the N-terminus, the 256-residue chain is Small ribosomal subunit protein eS1 (256 aa).

An N-acetylalanine; partial modification is found at Ala2.

This sequence belongs to the eukaryotic ribosomal protein eS1 family. Component of the small ribosomal subunit. Mature ribosomes consist of a small (40S) and a large (60S) subunit. The 40S subunit contains about 33 different proteins and 1 molecule of RNA (18S). The 60S subunit contains about 49 different proteins and 3 molecules of RNA (25S, 5.8S and 5S).

It localises to the cytoplasm. This chain is Small ribosomal subunit protein eS1, found in Meyerozyma guilliermondii (strain ATCC 6260 / CBS 566 / DSM 6381 / JCM 1539 / NBRC 10279 / NRRL Y-324) (Yeast).